A 220-amino-acid polypeptide reads, in one-letter code: Iron-sulfur cluster repair protein YtfE (220 aa).

It belongs to the RIC family. YtfE subfamily. Homodimer.

Its subcellular location is the cytoplasm. Di-iron-containing protein involved in the repair of iron-sulfur clusters damaged by oxidative and nitrosative stress conditions. The polypeptide is Iron-sulfur cluster repair protein YtfE (Salmonella paratyphi A (strain AKU_12601)).